We begin with the raw amino-acid sequence, 34 residues long: Photosystem II reaction center protein M (34 aa).

The chain crosses the membrane as a helical span at residues 5-25 (ILAFIATALFILIPTAFLLII).

Belongs to the PsbM family. As to quaternary structure, PSII is composed of 1 copy each of membrane proteins PsbA, PsbB, PsbC, PsbD, PsbE, PsbF, PsbH, PsbI, PsbJ, PsbK, PsbL, PsbM, PsbT, PsbX, PsbY, PsbZ, Psb30/Ycf12, at least 3 peripheral proteins of the oxygen-evolving complex and a large number of cofactors. It forms dimeric complexes.

It is found in the plastid. The protein localises to the chloroplast thylakoid membrane. Its function is as follows. One of the components of the core complex of photosystem II (PSII). PSII is a light-driven water:plastoquinone oxidoreductase that uses light energy to abstract electrons from H(2)O, generating O(2) and a proton gradient subsequently used for ATP formation. It consists of a core antenna complex that captures photons, and an electron transfer chain that converts photonic excitation into a charge separation. This subunit is found at the monomer-monomer interface. This is Photosystem II reaction center protein M from Lolium perenne (Perennial ryegrass).